A 192-amino-acid polypeptide reads, in one-letter code: Protein CREG1 (192 aa).

The N-terminal stretch at 1–18 is a signal peptide; it reads MVLLAFLCAAALAALARG. Asparagine 95, asparagine 133, and asparagine 166 each carry an N-linked (GlcNAc...) asparagine glycan.

This sequence belongs to the CREG family.

The protein resides in the secreted. Its function is as follows. May contribute to the transcriptional control of cell growth and differentiation. This chain is Protein CREG1 (CREG1), found in Gallus gallus (Chicken).